Consider the following 222-residue polypeptide: Ribonuclease 3 (222 aa).

Residues 3-125 (SQSVAKKLNH…LFGAIYLDAG (123 aa)) enclose the RNase III domain. Glutamate 38 is a Mg(2+) binding site. Aspartate 42 is a catalytic residue. Positions 111 and 114 each coordinate Mg(2+). The active site involves glutamate 114. The region spanning 152-222 (DAKTRLQEWL…AEKALKELLA (71 aa)) is the DRBM domain.

The protein belongs to the ribonuclease III family. In terms of assembly, homodimer. Mg(2+) is required as a cofactor.

It localises to the cytoplasm. The enzyme catalyses Endonucleolytic cleavage to 5'-phosphomonoester.. Digests double-stranded RNA. Involved in the processing of primary rRNA transcript to yield the immediate precursors to the large and small rRNAs (23S and 16S). Processes some mRNAs, and tRNAs when they are encoded in the rRNA operon. Processes pre-crRNA and tracrRNA of type II CRISPR loci if present in the organism. The sequence is that of Ribonuclease 3 from Dechloromonas aromatica (strain RCB).